A 114-amino-acid chain; its full sequence is MAVNLYDYANQLEQALRDSDEYKAIKDAFAKVKENEESKKLFDEFRETQMSFQQKQMQGEEIPEEDLQKAQEQAQAIEKDENISELMNAEQKMSQVFQEINQIIVKPLDEIYAD.

The protein belongs to the UPF0342 family.

This is UPF0342 protein SERP1381 from Staphylococcus epidermidis (strain ATCC 35984 / DSM 28319 / BCRC 17069 / CCUG 31568 / BM 3577 / RP62A).